The chain runs to 410 residues: Metacaspase-1B (410 aa).

Positions 1-106 are disordered; the sequence is MYHRNSAPPP…SFGKGAPSNY (106 aa). Pro residues-rich tracts occupy residues 7-23 and 32-52; these read APPP…PQSQ and PPYP…PPPT. Active-site residues include H201 and C257.

The protein belongs to the peptidase C14B family.

In terms of biological role, involved in cell death (apoptosis). This Aspergillus clavatus (strain ATCC 1007 / CBS 513.65 / DSM 816 / NCTC 3887 / NRRL 1 / QM 1276 / 107) protein is Metacaspase-1B (casB).